We begin with the raw amino-acid sequence, 1113 residues long: MNDWQWLKNRLVNSKTKSVSFWLPQTSSNIIDIAELIKCCSELKNTSINGLIDFLNQQDKLEFNLTRLKEIDVEDGKQLFGIETSVYKHFQNEIARFYKQVNKHFRETGSESLFLALPVIEGINEFNDIFRAPLLYVGVKLKVSPRFERFWLEINKEEIFLNPTIIGVETNKRNSLFKNNYDTTKIDVNDALKVFSELEYEFRMPLTSELKSFSKKAKSDFNTEKRTNYLINNVLLGIFDVKGDQLFQNFNEILNTDPDVLDELLKDRRDLLLENREFREQFDLKDTYLFSHLDIYQQYAVKQALLGDLIIEGPPGTGKSETIVNILVNLVLNNKKVLFVSEKVTALDVVYNRLGSFKHIALFNASVAAEKKRFYNQFAEFETYFTTYFSKKDLDATLPTFEGKWVDDILGAFQALQALYDTKINSGENLFSFKEIVSSFQMLDASYIKIKEYERFDEWVRVFSNPLWLEKHLSYQELKKELSQRWNGIDNFYQLQSLLNQTKKRKVLNYVLEHFEQFNTVISPKHVLFYKPSNKSQLLLKQLKQDVEQYTSLQRFQSPTKFETIKLNFINQVNENPTPWFFSWFIQFHAKPLLEKLVSFESNIIKTKQAYLNGIESYVASCKKLLKTTILNNFFQLYQTNKDELLEICRQAKNPVLKEITWWFKKHFELLKKLFPVHIMTLESAATLTPNQRGLYDYVVIDEASQVFLERAIPILFRADKYIIAGDTKQLKPANFFQSRAEYDVDEEFEDGNIEAAVHSSSLLHFLKNRSRILTLLKFHYRSDSADLIAFTNNRIYDNELIFMNKANADQRVFIVHDVIDGIWKNNRNLQEARDVVQRLEQLTTTNDYKKSLGVICFNKNQADLIEYLIDKQNNPLLNEWRERQNDVGEYEGLFVKNIENVQGDERDIIIFSLGYDRSVNSYGPISKQGGENRLNVAITRAKQRIELFKTNRGEDYNGLSSSSLGSKLLVEYLLYCEAMAKNQGEKITFQAVKRKETKAKYELAVENDFFNQLQAIFGGEFEIKRNVNEGAYFFSFVFYFNNIPYLAIDFNIPIPTSRKQVMEGILYREQFLKKRQWNLINIWIDEWKLNPIGVISKIRSSLAVHQNQHEEI.

313–320 serves as a coordination point for ATP; the sequence is GPPGTGKS.

This sequence belongs to the DNA2/NAM7 helicase family.

This is an uncharacterized protein from Mycoplasma genitalium (strain ATCC 33530 / DSM 19775 / NCTC 10195 / G37) (Mycoplasmoides genitalium).